A 255-amino-acid polypeptide reads, in one-letter code: Epoxyqueuosine reductase QueH (255 aa).

Cys44, Cys45, Cys128, and Cys131 together coordinate [4Fe-4S] cluster. An intrachain disulfide couples Cys210 to Cys212.

It belongs to the QueH family.

The enzyme catalyses epoxyqueuosine(34) in tRNA + AH2 = queuosine(34) in tRNA + A + H2O. Its pathway is tRNA modification; tRNA-queuosine biosynthesis. In terms of biological role, catalyzes the conversion of epoxyqueuosine (oQ) to queuosine (Q), which is a hypermodified base found in the wobble positions of tRNA(Asp), tRNA(Asn), tRNA(His) and tRNA(Tyr). The sequence is that of Epoxyqueuosine reductase QueH from Streptococcus pyogenes serotype M1.